A 117-amino-acid chain; its full sequence is UPF0122 protein Cthe_0771 (117 aa).

The protein belongs to the UPF0122 family.

Functionally, might take part in the signal recognition particle (SRP) pathway. This is inferred from the conservation of its genetic proximity to ftsY/ffh. May be a regulatory protein. In Acetivibrio thermocellus (strain ATCC 27405 / DSM 1237 / JCM 9322 / NBRC 103400 / NCIMB 10682 / NRRL B-4536 / VPI 7372) (Clostridium thermocellum), this protein is UPF0122 protein Cthe_0771.